Reading from the N-terminus, the 215-residue chain is Urease accessory protein UreF (215 aa).

Belongs to the UreF family. UreD, UreF and UreG form a complex that acts as a GTP-hydrolysis-dependent molecular chaperone, activating the urease apoprotein by helping to assemble the nickel containing metallocenter of UreC. The UreE protein probably delivers the nickel.

The protein localises to the cytoplasm. Its function is as follows. Required for maturation of urease via the functional incorporation of the urease nickel metallocenter. The sequence is that of Urease accessory protein UreF from Paracoccus denitrificans (strain Pd 1222).